A 365-amino-acid chain; its full sequence is UDP-N-acetylglucosamine--N-acetylmuramyl-(pentapeptide) pyrophosphoryl-undecaprenol N-acetylglucosamine transferase (365 aa).

UDP-N-acetyl-alpha-D-glucosamine-binding positions include 13-15 (TGG), N125, R165, S192, and Q293.

Belongs to the glycosyltransferase 28 family. MurG subfamily.

It localises to the cell inner membrane. It carries out the reaction di-trans,octa-cis-undecaprenyl diphospho-N-acetyl-alpha-D-muramoyl-L-alanyl-D-glutamyl-meso-2,6-diaminopimeloyl-D-alanyl-D-alanine + UDP-N-acetyl-alpha-D-glucosamine = di-trans,octa-cis-undecaprenyl diphospho-[N-acetyl-alpha-D-glucosaminyl-(1-&gt;4)]-N-acetyl-alpha-D-muramoyl-L-alanyl-D-glutamyl-meso-2,6-diaminopimeloyl-D-alanyl-D-alanine + UDP + H(+). Its pathway is cell wall biogenesis; peptidoglycan biosynthesis. Cell wall formation. Catalyzes the transfer of a GlcNAc subunit on undecaprenyl-pyrophosphoryl-MurNAc-pentapeptide (lipid intermediate I) to form undecaprenyl-pyrophosphoryl-MurNAc-(pentapeptide)GlcNAc (lipid intermediate II). The chain is UDP-N-acetylglucosamine--N-acetylmuramyl-(pentapeptide) pyrophosphoryl-undecaprenol N-acetylglucosamine transferase from Ruegeria sp. (strain TM1040) (Silicibacter sp.).